The primary structure comprises 520 residues: 2-isopropylmalate synthase (520 aa).

Residues 4 to 266 (VEFLDTTLRD…TSDIVLNETV (263 aa)) form the Pyruvate carboxyltransferase domain. Mn(2+) is bound by residues Asp13, His201, His203, and Asn237. The interval 390–520 (HFGDLKLTSN…AVSFRDVPTN (131 aa)) is regulatory domain.

It belongs to the alpha-IPM synthase/homocitrate synthase family. LeuA type 1 subfamily. As to quaternary structure, homodimer. Requires Mn(2+) as cofactor.

Its subcellular location is the cytoplasm. It catalyses the reaction 3-methyl-2-oxobutanoate + acetyl-CoA + H2O = (2S)-2-isopropylmalate + CoA + H(+). It participates in amino-acid biosynthesis; L-leucine biosynthesis; L-leucine from 3-methyl-2-oxobutanoate: step 1/4. In terms of biological role, catalyzes the condensation of the acetyl group of acetyl-CoA with 3-methyl-2-oxobutanoate (2-ketoisovalerate) to form 3-carboxy-3-hydroxy-4-methylpentanoate (2-isopropylmalate). In Streptococcus gallolyticus (strain UCN34), this protein is 2-isopropylmalate synthase.